The chain runs to 720 residues: Putative glutamine--fructose-6-phosphate aminotransferase [isomerizing] (720 aa).

Catalysis depends on cysteine 2, which acts as the Nucleophile; for GATase activity. One can recognise a Glutamine amidotransferase type-2 domain in the interval 2–321 (CGIFGYCNFL…DNDIAHIYDG (320 aa)). The segment covering 266 to 280 (STTSTFNHGSSTETP) has biased composition (polar residues). The interval 266–285 (STTSTFNHGSSTETPAENGL) is disordered. 2 SIS domains span residues 393 to 532 (WLTE…DLVS) and 565 to 710 (CDKK…VDLP).

The catalysed reaction is D-fructose 6-phosphate + L-glutamine = D-glucosamine 6-phosphate + L-glutamate. Its pathway is nucleotide-sugar biosynthesis; UDP-N-acetyl-alpha-D-glucosamine biosynthesis; alpha-D-glucosamine 6-phosphate from D-fructose 6-phosphate: step 1/1. In terms of biological role, involved in amino sugar synthesis (formation of chitin, supplies the amino sugars of asparagine-linked oligosaccharides of glycoproteins). The sequence is that of Putative glutamine--fructose-6-phosphate aminotransferase [isomerizing] from Saccharomyces cerevisiae (strain RM11-1a) (Baker's yeast).